Consider the following 178-residue polypeptide: Inner membrane-spanning protein YciB (178 aa).

The next 5 membrane-spanning stretches (helical) occupy residues 22–42 (IFVASGALIVASAIALAVSWL), 50–70 (MALFTFALVAIFGTLTIALHN), 76–96 (WKVTIIYGLFTLALLFSHWFM), 121–141 (IAWALFFLACGLANIYVAFWL), and 149–169 (FKVFGLSGLTLLFTLLSGIYI).

Belongs to the YciB family.

It is found in the cell inner membrane. Plays a role in cell envelope biogenesis, maintenance of cell envelope integrity and membrane homeostasis. This chain is Inner membrane-spanning protein YciB, found in Erwinia tasmaniensis (strain DSM 17950 / CFBP 7177 / CIP 109463 / NCPPB 4357 / Et1/99).